A 69-amino-acid polypeptide reads, in one-letter code: Cytochrome c oxidase copper chaperone (69 aa).

Residues Cys23 and Cys24 each coordinate Cu cation. A CHCH domain is found at 23–65 (CCVCKPEKEERDTCILFNGQDSEKCKEFIEKYKECMKGYGFEV). 2 short sequence motifs (cx9C motif) span residues 26-36 (CKPEKEERDTC) and 47-57 (CKEFIEKYKEC). 2 disulfides stabilise this stretch: Cys26/Cys57 and Cys36/Cys47.

This sequence belongs to the COX17 family.

The protein resides in the mitochondrion intermembrane space. In terms of biological role, copper chaperone for cytochrome c oxidase (COX). Binds two copper ions and deliver them to the Cu(A) site of COX. This chain is Cytochrome c oxidase copper chaperone (COX17), found in Saccharomyces cerevisiae (strain ATCC 204508 / S288c) (Baker's yeast).